A 360-amino-acid polypeptide reads, in one-letter code: Phenylalanine--tRNA ligase alpha subunit (360 aa).

Residue E260 participates in Mg(2+) binding.

It belongs to the class-II aminoacyl-tRNA synthetase family. Phe-tRNA synthetase alpha subunit type 1 subfamily. As to quaternary structure, tetramer of two alpha and two beta subunits. It depends on Mg(2+) as a cofactor.

The protein localises to the cytoplasm. The catalysed reaction is tRNA(Phe) + L-phenylalanine + ATP = L-phenylalanyl-tRNA(Phe) + AMP + diphosphate + H(+). The sequence is that of Phenylalanine--tRNA ligase alpha subunit from Methylobacterium radiotolerans (strain ATCC 27329 / DSM 1819 / JCM 2831 / NBRC 15690 / NCIMB 10815 / 0-1).